Consider the following 377-residue polypeptide: DNA replication and repair protein RecF (377 aa).

30–37 provides a ligand contact to ATP; it reads GPNGVGKT.

This sequence belongs to the RecF family.

Its subcellular location is the cytoplasm. The RecF protein is involved in DNA metabolism; it is required for DNA replication and normal SOS inducibility. RecF binds preferentially to single-stranded, linear DNA. It also seems to bind ATP. This chain is DNA replication and repair protein RecF, found in Salinispora tropica (strain ATCC BAA-916 / DSM 44818 / JCM 13857 / NBRC 105044 / CNB-440).